The chain runs to 52 residues: Large ribosomal subunit protein eL39 (52 aa).

Belongs to the eukaryotic ribosomal protein eL39 family.

This is Large ribosomal subunit protein eL39 from Desulfurococcus amylolyticus (strain DSM 18924 / JCM 16383 / VKM B-2413 / 1221n) (Desulfurococcus kamchatkensis).